We begin with the raw amino-acid sequence, 400 residues long: Egl nine homolog 1 (400 aa).

N-acetylalanine is present on Ala2. Residues 6-20 (GGPGVLSASERDRQY) form a required for nuclear export region. Ser12 carries the phosphoserine modification. Positions 21, 24, 33, 36, 42, 46, 54, and 58 each coordinate Zn(2+). An MYND-type; atypical zinc finger spans residues 21 to 58 (CELCGKMENLLRCGRCRSSFYCCKEHQRQDWKKHKLVC). Residues 62-74 (EAPRAQPAPAQPR) are compositionally biased toward low complexity. Residues 62–161 (EAPRAQPAPA…PGGGLRPNGQ (100 aa)) form a disordered region. A Phosphoserine modification is found at Ser114. Residues 142 to 157 (AGGGPGEALSPGGGLR) are compositionally biased toward gly residues. Cys178 and Cys185 each carry S-nitrosocysteine. Residues 218 to 228 (VSQKSDSSKDI) form a beta(2)beta(3) 'finger-like' loop region. The 99-residue stretch at 271-369 (GRTKAMVACY…RYAITVWYFD (99 aa)) folds into the Fe2OG dioxygenase domain. Cys279 is modified (S-nitrosocysteine). Fe cation is bound by residues His290 and Asp292. Residues Cys300 and Cys303 each carry the S-nitrosocysteine modification. His351 lines the Fe cation pocket. Arg360 is a 2-oxoglutarate binding site.

In terms of assembly, monomer. Interacts with ING4; the interaction inhibits the hydroxylation of HIF alpha proteins. Interacts with PTGES3 (via PXLE motif); thereby recruiting EGLN1 to the HSP90 pathway to facilitate HIF alpha proteins hydroxylation. Interacts with LIMD1. Found in a complex composed of LIMD1, VHL, EGLN1/PHD2, ELOB and CUL2. Interacts with EPAS1. Interacts with CBFA2T3 and HIF1A. Fe(2+) serves as cofactor. L-ascorbate is required as a cofactor. Post-translationally, S-nitrosylation inhibits the enzyme activity up to 60% under aerobic conditions. Chelation of Fe(2+) has no effect on the S-nitrosylation. It is uncertain whether nitrosylation occurs on Cys-300 or Cys-303. As to expression, expressed in heart, brain liver, skeletal muscle and kidney. Low levels were detected in the lung. Constitutively expressed during differentiation of C2C12 skeletal myocytes.

Its subcellular location is the cytoplasm. It localises to the nucleus. The catalysed reaction is L-prolyl-[hypoxia-inducible factor alpha subunit] + 2-oxoglutarate + O2 = trans-4-hydroxy-L-prolyl-[hypoxia-inducible factor alpha subunit] + succinate + CO2. Functionally, cellular oxygen sensor that catalyzes, under normoxic conditions, the post-translational formation of 4-hydroxyproline in hypoxia-inducible factor (HIF) alpha proteins. Hydroxylates a specific proline found in each of the oxygen-dependent degradation (ODD) domains (N-terminal, NODD, and C-terminal, CODD) of HIF1A. Also hydroxylates HIF2A. Has a preference for the CODD site for both HIF1A and HIF1B. Hydroxylated HIFs are then targeted for proteasomal degradation via the von Hippel-Lindau ubiquitination complex. Under hypoxic conditions, the hydroxylation reaction is attenuated allowing HIFs to escape degradation resulting in their translocation to the nucleus, heterodimerization with HIF1B, and increased expression of hypoxy-inducible genes. EGLN1 is the most important isozyme under normoxia and, through regulating the stability of HIF1, involved in various hypoxia-influenced processes such as angiogenesis in retinal and cardiac functionality. Target proteins are preferentially recognized via a LXXLAP motif. This chain is Egl nine homolog 1 (Egln1), found in Mus musculus (Mouse).